The sequence spans 429 residues: Cytochrome P450 BJ-3 (429 aa).

Position 376 (Cys376) interacts with heme.

It belongs to the cytochrome P450 family. Heme is required as a cofactor.

Cytochromes P450 are a group of heme-thiolate monooxygenases. They oxidize a variety of structurally unrelated compounds, including steroids, fatty acids, and xenobiotics. The polypeptide is Cytochrome P450 BJ-3 (cyp114) (Bradyrhizobium diazoefficiens (strain JCM 10833 / BCRC 13528 / IAM 13628 / NBRC 14792 / USDA 110)).